A 443-amino-acid polypeptide reads, in one-letter code: Serine/threonine-protein phosphatase 2A 55 kDa regulatory subunit B beta isoform (443 aa).

WD repeat units follow at residues 22–61, 87–128, 171–209, and 220–260; these read TEAD…KNQV, EIEE…KRPE, AHTY…QSFN, and ELTE…CVTG. At S275 the chain carries Phosphoserine. 3 WD repeats span residues 279-317, 334-375, and 410-442; these read KLSS…RPIE, ENDC…DVTL, and DFSK…QDKV. T298 is subject to Phosphothreonine.

The protein belongs to the phosphatase 2A regulatory subunit B family. PP2A consists of a common heterodimeric core enzyme, composed of a 36 kDa catalytic subunit (subunit C) and a 65 kDa constant regulatory subunit (PR65 or subunit A), that associates with a variety of regulatory subunits. Proteins that associate with the core dimer include three families of regulatory subunits B (the R2/B/PR55/B55, R3/B''/PR72/PR130/PR59 and R5/B'/B56 families), the 48 kDa variable regulatory subunit, viral proteins, and cell signaling molecules. Interacts with TOMM22. Interacts with IER5 (via N- and C-terminal regions). Brain.

The protein resides in the cytoplasm. The protein localises to the cytoskeleton. It localises to the membrane. Functionally, the B regulatory subunit might modulate substrate selectivity and catalytic activity, and might also direct the localization of the catalytic enzyme to a particular subcellular compartment. This is Serine/threonine-protein phosphatase 2A 55 kDa regulatory subunit B beta isoform (PPP2R2B) from Sus scrofa (Pig).